Consider the following 116-residue polypeptide: MTFNKIFKYLISLLFLSILFHTIIHKNNLVFSKTMHKKVAFFSFSFFFVWIRHLKRYNSMLEKATFFVLQTSYTNELKGLYIAGNSYPYYQDKKKLVFNSFQKPFKNHQSTKIPRE.

Functionally, putative control of replication message. The polypeptide is Protein cop (cop) (Staphylococcus aureus).